A 328-amino-acid chain; its full sequence is Phosphate acyltransferase (328 aa).

Belongs to the PlsX family. In terms of assembly, homodimer. Probably interacts with PlsY.

Its subcellular location is the cytoplasm. The catalysed reaction is a fatty acyl-[ACP] + phosphate = an acyl phosphate + holo-[ACP]. It participates in lipid metabolism; phospholipid metabolism. Functionally, catalyzes the reversible formation of acyl-phosphate (acyl-PO(4)) from acyl-[acyl-carrier-protein] (acyl-ACP). This enzyme utilizes acyl-ACP as fatty acyl donor, but not acyl-CoA. The chain is Phosphate acyltransferase from Pseudothermotoga lettingae (strain ATCC BAA-301 / DSM 14385 / NBRC 107922 / TMO) (Thermotoga lettingae).